The sequence spans 351 residues: Centromere-binding protein 1 (351 aa).

At Met1 the chain carries N-acetylmethionine. 3 stretches are compositionally biased toward polar residues: residues 1–10 (MNSLANNNKL), 43–52 (LLSQESNDGN), and 65–77 (KGTQSQYESGLTS). 3 disordered regions span residues 1-164 (MNSL…TQQS), 196-233 (KKDISMQPGRRGRKPTTLATTDEWKKQRKDSHKEVERR), and 327-351 (YEDMHTHKKQENERKSTRSDNPHEA). At Ser45 the chain carries Phosphoserine; by ATM or ATR. Ser48 bears the Phosphoserine mark. Residue Ser84 is modified to Phosphoserine. Polar residues-rich tracts occupy residues 100 to 124 (VNYTDLIQGQEDSSDAHTSNQTNAN) and 138 to 164 (TPSNEGVKPNTSLEGMTSSPMESTQQS). Phosphothreonine is present on Thr138. In terms of domain architecture, bHLH spans 222-270 (QRKDSHKEVERRRRENINTAINVLSDLLPVRESSKAAILACAAEYIQKL).

As to quaternary structure, binds DNA as a dimer. Associates with MET4 to form a heteromeric complex which also includes MET28.

The protein localises to the nucleus. Its subcellular location is the mitochondrion. The protein resides in the chromosome. It localises to the centromere. Its function is as follows. Required for chromosome stability and methionine prototrophy. It is involved in chromosomal segregation. Binds to a highly conserved DNA sequence (5'-RTCACRTG-3'), called CDEI, found in centromeres and in several promoters. DNA-binding activity is enhanced by MET28. Required as an auxiliary factor for transcriptional activation of sulfur metabolism together with MET4 and MET28. The protein is Centromere-binding protein 1 (CBF1) of Saccharomyces cerevisiae (strain ATCC 204508 / S288c) (Baker's yeast).